We begin with the raw amino-acid sequence, 350 residues long: Palmitoyltransferase erf2 (350 aa).

The Cytoplasmic segment spans residues 1-86; the sequence is MSYEKHSDAK…RLQMSSQYKA (86 aa). The chain crosses the membrane as a helical span at residues 87–107; that stretch reads FLISLFALILPGVLFFIFSAF. Residues 108 to 112 are Lumenal-facing; the sequence is WLWHH. A helical transmembrane segment spans residues 113–133; it reads VSPAVPITFAYLYALAVVSMF. The Cytoplasmic portion of the chain corresponds to 134-225; the sequence is KCSTADPGIL…NTCIGRRNYR (92 aa). In terms of domain architecture, DHHC spans 182–232; that stretch reads VYCHTCHLYRPPRASHCHLCDNCVEYLDHHCIWLNTCIGRRNYRYYFIFLL. The active-site S-palmitoyl cysteine intermediate is cysteine 212. A helical transmembrane segment spans residues 226–246; that stretch reads YYFIFLLSVVLSALYLTGLGF. At 247 to 270 the chain is on the lumenal side; the sequence is YTSIGSFHESTDTNFAAHLRRPWA. A helical transmembrane segment spans residues 271–291; that stretch reads GVSFFLGIYGALGAILPGILF. The Cytoplasmic portion of the chain corresponds to 292–350; it reads CYQCYLISVGQNVHEYLRAKSTETEDVHPFHDSIWLNFLVVLCRPKNVSYVRPTRKSYV.

The protein belongs to the DHHC palmitoyltransferase family. ERF2/ZDHHC9 subfamily. Interacts with erf4. In terms of processing, autopalmitoylated.

It is found in the endoplasmic reticulum membrane. The protein localises to the golgi apparatus. The protein resides in the golgi stack membrane. The enzyme catalyses L-cysteinyl-[protein] + hexadecanoyl-CoA = S-hexadecanoyl-L-cysteinyl-[protein] + CoA. Its function is as follows. The erf2-erf4 complex is a palmitoyltransferase with a major role in driving sexual development. Palmitoylates ras1. Palmitoylates isp3. Palmitoylates rho3. This chain is Palmitoyltransferase erf2, found in Schizosaccharomyces pombe (strain 972 / ATCC 24843) (Fission yeast).